A 470-amino-acid chain; its full sequence is Putative multidrug resistance protein MdtD (470 aa).

Over 1–11 (MTEFPDNTRWQ) the chain is Periplasmic. Residues 12–32 (LWIVAFGFFMQSLDTTIVNTA) form a helical membrane-spanning segment. Residues 33–48 (LPSMAKSLGESPLHMH) lie on the Cytoplasmic side of the membrane. The helical transmembrane segment at 49 to 69 (MVVVSYVLTVAVMLPASGWLA) threads the bilayer. The Periplasmic segment spans residues 70–76 (DKIGVRN). A helical membrane pass occupies residues 77 to 97 (IFFAAIVLFTLGSLFCALSGT). Over 98 to 101 (LNQL) the chain is Cytoplasmic. The chain crosses the membrane as a helical span at residues 102–124 (VLARVLQGVGGAMMVPVGRLTVM). At 125-137 (KIVPRAQYMAAMT) the chain is on the periplasmic side. The helical transmembrane segment at 138–158 (FVALPGQIGPLLGPALGGVLV) threads the bilayer. Residues 159-164 (EYASWH) lie on the Cytoplasmic side of the membrane. The chain crosses the membrane as a helical span at residues 165-185 (WIFLINIPVGIVGAMATFMLM). The Periplasmic portion of the chain corresponds to 186 to 196 (PNYTIETRRFD). A helical membrane pass occupies residues 197–217 (LPGFLLLAIGMAVLTLALDGS). Residues 218 to 224 (KSMGISP) lie on the Cytoplasmic side of the membrane. Residues 225–245 (WTLAGLAAGGAAAILLYLFHA) traverse the membrane as a helical segment. At 246–262 (KKNSGALFSLRLFRTPT) the chain is on the periplasmic side. Residues 263–283 (FSLGLLGSFAGRIGSGMLPFM) form a helical membrane-spanning segment. The Cytoplasmic portion of the chain corresponds to 284–285 (TP). A helical transmembrane segment spans residues 286-306 (VFLQIGLGFSPFHAGLMMIPM). The Periplasmic portion of the chain corresponds to 307–341 (VLGSMGMKRIVVQIVNRFGYRRVLVATTLGLALVS). A helical membrane pass occupies residues 342-362 (LLFMSVALLGWYYLLPLVLLL). At 363–395 (QGMVNSARFSSMNTLTLKDLPDTLASSGNSLLS) the chain is on the cytoplasmic side. Residues 396-416 (MIMQLSMSIGVTIAGMLLGMF) form a helical membrane-spanning segment. The Periplasmic portion of the chain corresponds to 417-430 (GQQHIGIDSSATHH). A helical transmembrane segment spans residues 431 to 451 (VFMYTWLCMAVIIALPAIIFA). Over 452 to 470 (RVPNDTQQNMVISRRKRSL) the chain is Cytoplasmic.

The protein belongs to the major facilitator superfamily. TCR/Tet family.

Its subcellular location is the cell inner membrane. In Salmonella typhi, this protein is Putative multidrug resistance protein MdtD.